Here is a 525-residue protein sequence, read N- to C-terminus: Ent-kaurene oxidase (525 aa).

The chain crosses the membrane as a helical span at residues 31-51 (VHWLIYVAFGAWLCSYVIHVL). Cys466 serves as a coordination point for heme.

The protein belongs to the cytochrome P450 family. Requires heme as cofactor.

Its subcellular location is the membrane. It catalyses the reaction ent-kaur-16-ene + 3 reduced [NADPH--hemoprotein reductase] + 3 O2 = ent-kaur-16-en-19-oate + 3 oxidized [NADPH--hemoprotein reductase] + 4 H2O + 4 H(+). It participates in plant hormone biosynthesis; gibberellin biosynthesis. Functionally, catalyzes three successive oxidations of the 4-methyl group of ent-kaurene giving kaurenoic acid, a key step in gibberellin (GA) biosynthesis. This is Ent-kaurene oxidase (CYP503A1) from Fusarium fujikuroi (Bakanae and foot rot disease fungus).